The chain runs to 396 residues: Pyridinium-3,5-bisthiocarboxylic acid mononucleotide nickel insertion protein (396 aa).

It belongs to the LarC family.

It carries out the reaction Ni(II)-pyridinium-3,5-bisthiocarboxylate mononucleotide = pyridinium-3,5-bisthiocarboxylate mononucleotide + Ni(2+). Involved in the biosynthesis of a nickel-pincer cofactor ((SCS)Ni(II) pincer complex). Binds Ni(2+), and functions in nickel delivery to pyridinium-3,5-bisthiocarboxylic acid mononucleotide (P2TMN), to form the mature cofactor. Is thus probably required for the activation of nickel-pincer cofactor-dependent enzymes. The chain is Pyridinium-3,5-bisthiocarboxylic acid mononucleotide nickel insertion protein from Moorella thermoacetica (strain ATCC 39073 / JCM 9320).